A 679-amino-acid polypeptide reads, in one-letter code: MEKNFKRTTVTSALPYANGPVHIGHLAGVYVPADIYVRYLRLKKEDVLFIGGSDEHGVPITIRAKKEGITPQDVVDRYHFLIKKSFEEFGISFDVYSRTSSKTHHELASDFFKKLYEKGEFIEKTSEQYYDEEAHQFLADRYITGECPHCHSEGAYGDQCEKCGTSLSPTDLINPKSAISGSKPVMKETKHWYLPLDKHETWLRQWILEEHKEWRPNVYGQCKSWLDMGLQPRAVSRDLDWGIPVPVEGAEGKVLYVWFDAPIGYISNTKELLPDSWETWWKDPETRLVHFIGKDNIVFHCIVFPAMLKAEGSYILPDNVPSNEFLNLEGDKISTSRNWAVWLHEYLEDFPGKQDVLRYVLTANAPETKDNDFTWKDFQARNNNELVAVYGNFVNRAMVLTQKYFEGKVPAAGELIDYDKETLKEFSDVKAEVEKLLNVFKFRDAQKEAMNLARIGNKYLADTEPWKLAKTDMERVGTILNISLQLVANLAIAFEPFLPFSSERLRQMLNMDSFDWAELGRNDLLPAGHQLNKPELLFEKIEDATIEAQVQKLLDTKKANEEANYKAKPIRANIEFDDFMKLDIRVGTVLECQKVPKADKLLQFKIDDGLETRTIVSGIAQHYKPEELVGKQVCFIANLAPRKLKGIVSEGMILSAENNDGSLAVVMPGREVKPGSEVK.

A 'HIGH' region motif is present at residues 15 to 25 (PYANGPVHIGH). Cysteine 147, cysteine 150, cysteine 160, and cysteine 163 together coordinate Zn(2+). A 'KMSKS' region motif is present at residues 332–336 (KISTS). Threonine 335 contributes to the ATP binding site. Positions 578–679 (DFMKLDIRVG…REVKPGSEVK (102 aa)) constitute a tRNA-binding domain.

This sequence belongs to the class-I aminoacyl-tRNA synthetase family. MetG type 1 subfamily. Homodimer. Requires Zn(2+) as cofactor.

Its subcellular location is the cytoplasm. The catalysed reaction is tRNA(Met) + L-methionine + ATP = L-methionyl-tRNA(Met) + AMP + diphosphate. Its function is as follows. Is required not only for elongation of protein synthesis but also for the initiation of all mRNA translation through initiator tRNA(fMet) aminoacylation. In Bacteroides fragilis (strain ATCC 25285 / DSM 2151 / CCUG 4856 / JCM 11019 / LMG 10263 / NCTC 9343 / Onslow / VPI 2553 / EN-2), this protein is Methionine--tRNA ligase.